The sequence spans 453 residues: UDP-N-acetylmuramoylalanine--D-glutamate ligase (453 aa).

Residue 120-126 (GSNGKST) participates in ATP binding.

This sequence belongs to the MurCDEF family.

Its subcellular location is the cytoplasm. The catalysed reaction is UDP-N-acetyl-alpha-D-muramoyl-L-alanine + D-glutamate + ATP = UDP-N-acetyl-alpha-D-muramoyl-L-alanyl-D-glutamate + ADP + phosphate + H(+). The protein operates within cell wall biogenesis; peptidoglycan biosynthesis. Functionally, cell wall formation. Catalyzes the addition of glutamate to the nucleotide precursor UDP-N-acetylmuramoyl-L-alanine (UMA). The sequence is that of UDP-N-acetylmuramoylalanine--D-glutamate ligase from Nitrosococcus oceani (strain ATCC 19707 / BCRC 17464 / JCM 30415 / NCIMB 11848 / C-107).